Consider the following 663-residue polypeptide: Probable peptidyl-glycine alpha-amidating monooxygenase pamn-1 (663 aa).

The signal sequence occupies residues 1 to 21 (MNDRISINLIYLVLTFCCVSA). Residues 1–300 (MNDRISINLI…YDAKLDNPYP (300 aa)) are peptidylglycine alpha-hydroxylating monooxygenase. H75 and H76 together coordinate Cu(2+). A disulfide bridge connects residues C82 and C98. Residue H142 coordinates Cu(2+). N191 carries N-linked (GlcNAc...) asparagine glycosylation. Disulfide bonds link C194–C305 and C261–C283. Residues H210 and H212 each coordinate Cu(2+). N269 carries an N-linked (GlcNAc...) asparagine glycan. M282 lines the Cu(2+) pocket. Positions 301 to 663 (QGAICAKDYP…WQFKIRHDQN (363 aa)) are peptidyl-alpha-hydroxyglycine alpha-amidating lyase. R376 is an a protein binding site. N411 carries N-linked (GlcNAc...) asparagine glycosylation. NHL repeat units lie at residues 411 to 454 (NQTK…WKIE), 464 to 507 (SGEL…LDLN), 511 to 554 (IRQF…MTTQ), and 626 to 656 (FGQPHCLRVCPDGGHIFVGDIAEGKARLWQF). Cysteines 478 and 497 form a disulfide. Residues Y496 and R543 each coordinate a protein.

This sequence in the C-terminal section; belongs to the peptidyl-alpha-hydroxyglycine alpha-amidating lyase family. The protein in the N-terminal section; belongs to the copper type II ascorbate-dependent monooxygenase family. As to quaternary structure, monomer. Requires Zn(2+) as cofactor. The cofactor is Cu(2+).

It is found in the secreted. It catalyses the reaction a [peptide]-C-terminal glycine + 2 L-ascorbate + O2 = a [peptide]-C-terminal (2S)-2-hydroxyglycine + 2 monodehydro-L-ascorbate radical + H2O. The enzyme catalyses a [peptide]-C-terminal (2S)-2-hydroxyglycine = a [peptide]-C-terminal amide + glyoxylate. Functionally, probable bifunctional enzyme that catalyzes 2 sequential steps in C-terminal alpha-amidation of peptides. The monooxygenase part produces an unstable peptidyl(2-hydroxyglycine) intermediate that is dismutated to glyoxylate and the corresponding desglycine peptide amide by the lyase part. C-terminal amidation of peptides such as neuropeptides is essential for full biological activity. The polypeptide is Probable peptidyl-glycine alpha-amidating monooxygenase pamn-1 (Caenorhabditis elegans).